The chain runs to 278 residues: Multidrug-efflux transporter 1 regulator (278 aa).

Residues 5–75 (YYSIGEVSKL…LEEMKKAQDL (71 aa)) enclose the HTH merR-type domain. The segment at residues 8-27 (IGEVSKLANVSIKALRYYDK) is a DNA-binding region (H-T-H motif).

Binds DNA as a homodimer.

Its function is as follows. Activates transcription of the bmr gene in response to structurally dissimilar drugs. Binds rhodamine as an inducer. The protein is Multidrug-efflux transporter 1 regulator (bmrR) of Bacillus subtilis (strain 168).